The sequence spans 339 residues: MSTAVINADDDHMEPTLQSILDQRSLRWIFVGGKGGVGKTTTSCSLAIQLAKVRRSVLLISTDPAHNLSDAFSQKFGKEARLIDGFDNLSAMEIDPNGSIQDLLAGQGENEGAGDMGGVGGMMQDLAFAIPGIDEAMSFAEVLKQVKSLSYETIIFDTAPTGHTLRFLQFPSVLEKALAKVSQLSSQYGPLLNGFLGSNGTLPNGQNLNEMMEKLETLRATISEVNTQFKDERLTTFVCVCIPEFLSLYETERMIQELASYGIDTHSIVVNQLLFPKPGSDCEQCTARRKMQKKYLDQIEELYDEFNVVKMPLLVEEVRGKEKLEKFSEMLVKPFVPPQ.

34-41 (KGGVGKTT) contributes to the ATP binding site. Asp63 is a catalytic residue. ATP is bound by residues Glu244 and Asn271. Residues Cys282 and Cys285 each contribute to the Zn(2+) site.

Belongs to the arsA ATPase family. As to quaternary structure, homodimer.

It localises to the cytoplasm. The protein resides in the endoplasmic reticulum. In terms of biological role, ATPase required for the post-translational delivery of tail-anchored (TA) proteins to the endoplasmic reticulum. Recognizes and selectively binds the transmembrane domain of TA proteins in the cytosol. This complex then targets to the endoplasmic reticulum by membrane-bound receptors, where the tail-anchored protein is released for insertion. This process is regulated by ATP binding and hydrolysis. ATP binding drives the homodimer towards the closed dimer state, facilitating recognition of newly synthesized TA membrane proteins. ATP hydrolysis is required for insertion. Subsequently, the homodimer reverts towards the open dimer state, lowering its affinity for the membrane-bound receptor, and returning it to the cytosol to initiate a new round of targeting. The polypeptide is ATPase get3 (get3) (Neurospora crassa (strain ATCC 24698 / 74-OR23-1A / CBS 708.71 / DSM 1257 / FGSC 987)).